A 257-amino-acid polypeptide reads, in one-letter code: MTVVVSDHQNPRPPGDDAAPLGRTGNRDRPPGSFFGRRKGHRLRPHQNDLVAQLLPRLGFDPARIGPSGPAALFDPPVDETRIEIGFGGGEHLVAEALAFPRAGFIGCEPYVNGMAKILVQIEAHAIRNIRLFAGDASQLLACLPPASLARIDLIHPDPWPKRRHWKRRFVQDATVAEMARVLRPEGEFRFVSDIDDYCAWTLTHLARSPDFLWLAERSADWQDPWSGYTMTRYGRKAMREGRRAAYLRFRRERTAV.

Residues Met1–Arg42 form a disordered region. 4 residues coordinate S-adenosyl-L-methionine: Glu84, Glu109, Asp136, and Asp158. Residue Asp158 is part of the active site. 2 residues coordinate substrate: Lys162 and Asp194.

It belongs to the class I-like SAM-binding methyltransferase superfamily. TrmB family.

The enzyme catalyses guanosine(46) in tRNA + S-adenosyl-L-methionine = N(7)-methylguanosine(46) in tRNA + S-adenosyl-L-homocysteine. It functions in the pathway tRNA modification; N(7)-methylguanine-tRNA biosynthesis. Its function is as follows. Catalyzes the formation of N(7)-methylguanine at position 46 (m7G46) in tRNA. The sequence is that of tRNA (guanine-N(7)-)-methyltransferase from Nitrobacter winogradskyi (strain ATCC 25391 / DSM 10237 / CIP 104748 / NCIMB 11846 / Nb-255).